Consider the following 357-residue polypeptide: O-methyltransferase 9 (357 aa).

S-adenosyl-L-methionine-binding residues include Gly200, Asp224, Asn249, Phe250, and Lys263. His267 functions as the Proton acceptor in the catalytic mechanism.

It belongs to the class I-like SAM-binding methyltransferase superfamily. Cation-independent O-methyltransferase family. COMT subfamily.

It carries out the reaction (3,5-dichloro-2,4,6-trihydroxyphenyl)hexan-1-one + S-adenosyl-L-methionine = 1-(3,5-dichloro-2,6-dihydroxy-4-methoxyphenyl)hexan-1-one + S-adenosyl-L-homocysteine + H(+). This Dictyostelium discoideum (Social amoeba) protein is O-methyltransferase 9 (omt9).